A 181-amino-acid polypeptide reads, in one-letter code: Large ribosomal subunit protein uL6 (181 aa).

The protein belongs to the universal ribosomal protein uL6 family. In terms of assembly, part of the 50S ribosomal subunit.

This protein binds to the 23S rRNA, and is important in its secondary structure. It is located near the subunit interface in the base of the L7/L12 stalk, and near the tRNA binding site of the peptidyltransferase center. The protein is Large ribosomal subunit protein uL6 of Desulforudis audaxviator (strain MP104C).